Reading from the N-terminus, the 77-residue chain is Homeodomain-only protein (77 aa).

The homeobox; degenerate DNA-binding region spans 7–65; that stretch reads AALGVRLTEDQVKVLEENFTKVSKHPDETTLMLIAAECGLSEEQTAVWFRMRNAQWRKA.

It localises to the nucleus. It is found in the cytoplasm. Functionally, atypical homeodomain protein which does not bind DNA and is required to modulate cardiac growth and development. May act via an interaction with SRF, leading to modulate the expression of SRF-dependent cardiac-specific genes and cardiac development. May act as a co-chaperone for HSPA1A and HSPA1B chaperone proteins and assist in chaperone-mediated protein refolding. This Danio rerio (Zebrafish) protein is Homeodomain-only protein (hopx).